We begin with the raw amino-acid sequence, 866 residues long: MASSAQSPHFYLNPGKSNSFQSKAYKQRNVNFYWNFGIRRLFLRKSQGLSVLSSSSSSTHFSNSQLHGLCANGKLEEAMKLLNSMQELRVAVDEDVFVALVRLCEWKRAQEEGSKVYSIALSSMSSLGVELGNAFLAMFVRFGNLVDAWYVFGKMSERNLFSWNVLVGGYAKQGYFDEAMCLYHRMLWVGGVKPDVYTFPCVLRTCGGIPDLARGKEVHVHVVRYGYELDIDVVNALITMYVKCGDVKSARLLFDRMPRRDIISWNAMISGYFENGMCHEGLELFFAMRGLSVDPDLMTLTSVISACELLGDRRLGRDIHAYVITTGFAVDISVCNSLTQMYLNAGSWREAEKLFSRMERKDIVSWTTMISGYEYNFLPDKAIDTYRMMDQDSVKPDEITVAAVLSACATLGDLDTGVELHKLAIKARLISYVIVANNLINMYSKCKCIDKALDIFHNIPRKNVISWTSIIAGLRLNNRCFEALIFLRQMKMTLQPNAITLTAALAACARIGALMCGKEIHAHVLRTGVGLDDFLPNALLDMYVRCGRMNTAWSQFNSQKKDVTSWNILLTGYSERGQGSMVVELFDRMVKSRVRPDEITFISLLCGCSKSQMVRQGLMYFSKMEDYGVTPNLKHYACVVDLLGRAGELQEAHKFIQKMPVTPDPAVWGALLNACRIHHKIDLGELSAQHIFELDKKSVGYYILLCNLYADCGKWREVAKVRRMMKENGLTVDAGCSWVEVKGKVHAFLSDDKYHPQTKEINTVLEGFYEKMSEVGLTKISESSSMDETEISRDEIFCGHSERKAIAFGLINTVPGMPIWVTKNLSMCENCHDTVKFISKTVRREISVRDAEHFHHFKDGECSCGD.

The transit peptide at 1-52 (MASSAQSPHFYLNPGKSNSFQSKAYKQRNVNFYWNFGIRRLFLRKSQGLSVL) directs the protein to the chloroplast. PPR repeat units follow at residues 58–92 (STHF…RVAV), 93–123 (DEDV…ALSS), 128–158 (GVEL…MSER), 159–194 (NLFS…GVKP), 195–229 (DVYT…GYEL), 230–260 (DIDV…MPRR), 261–295 (DIIS…SVDP), 296–330 (DLMT…GFAV), 331–365 (DISV…DIVS), 366–396 (WTTM…SVKP), 397–431 (DEIT…RLIS), 432–466 (YVIV…NVIS), 467–493 (WTSI…MKMT), 497–531 (NAIT…GVGL), 532–561 (DDFL…SQKK), 562–596 (DVTS…RVRP), 597–631 (DEIT…GVTP), and 632–662 (NLKH…MPVT). A type E motif region spans residues 667–742 (VWGALLNACR…DAGCSWVEVK (76 aa)). The interval 743-773 (GKVHAFLSDDKYHPQTKEINTVLEGFYEKMS) is type E(+) motif. The interval 774–866 (EVGLTKISES…FKDGECSCGD (93 aa)) is type DYW motif.

This sequence belongs to the PPR family. PCMP-H subfamily.

It is found in the plastid. It localises to the chloroplast. Functionally, regulates the RNA editing of the chloroplast transcript accD, and is essential for the early stages of chloroplast biogenesis. Required for the RNA editing of the chloroplast transcript ndhF. This chain is Pentatricopeptide repeat-containing protein At1g15510, chloroplastic (PCMP-H73), found in Arabidopsis thaliana (Mouse-ear cress).